Reading from the N-terminus, the 174-residue chain is Probable calcium-binding protein CML20 (174 aa).

Gly2 carries the N-myristoyl glycine lipid modification. A disordered region spans residues 14–35 (LRRSRSRSPPPAVLDPSQSPLS). 4 EF-hand domains span residues 39–74 (EAEPELIRVFRCFDTDGDGLISAAEMREFYGCSVDE), 75–100 (AEEMVAAADRDGDGFVSIEELRAVME), 102–137 (GGLDALRAAFDEYDEDGNGVITAEELRRALRRLNLD), and 141–174 (LTAEQCAEIVAAVDSDGDGVISFDEFKAMMSKQA). Ca(2+)-binding residues include Asp52, Asp54, Asp56, Glu63, Asp83, Asp85, Asp87, Glu94, Asp115, Asp117, Asn119, Glu126, Asp154, Asp156, Asp158, and Glu165.

Potential calcium sensor. This chain is Probable calcium-binding protein CML20 (CML20), found in Oryza sativa subsp. japonica (Rice).